We begin with the raw amino-acid sequence, 161 residues long: uncharacterized protein (161 aa).

The next 2 helical transmembrane spans lie at 13 to 35 and 40 to 62; these read VAAVFAALYTSILGLAVLIPHAN and VFSAVMAAGLGILIALLAVPFIS.

The protein resides in the cell membrane. This is an uncharacterized protein from Archaeoglobus fulgidus (strain ATCC 49558 / DSM 4304 / JCM 9628 / NBRC 100126 / VC-16).